The sequence spans 336 residues: 3-hydroxyisobutyrate dehydrogenase, mitochondrial (336 aa).

Residues 1-36 (MAASLRLLGAASGLRYWSRRLRPAAGSFAAVCSRSV) constitute a mitochondrion transit peptide. NAD(+) is bound at residue 40–68 (TPVGFIGLGNMGNPMAKNLMKHGYPLIIY). Residues Lys60 and Lys76 each carry the N6-acetyllysine; alternate modification. 2 positions are modified to N6-succinyllysine; alternate: Lys60 and Lys76. Lys95 is modified (N6-succinyllysine). NAD(+) contacts are provided by residues 103-104 (LP) and Asn108. Residue Lys121 is modified to N6-acetyllysine. Residue Thr134 coordinates NAD(+). Residue Lys141 is modified to N6-succinyllysine. The residue at position 145 (Lys145) is an N6-acetyllysine. At Lys149 the chain carries N6-acetyllysine; alternate. Lys149 carries the N6-succinyllysine; alternate modification. The active site involves Lys209. Residues Lys238 and Lys242 each carry the N6-acetyllysine; alternate modification. N6-succinyllysine; alternate occurs at positions 238 and 242. Position 284 (Lys284) interacts with NAD(+). Lys297 is subject to N6-succinyllysine. The residue at position 321 (Lys321) is an N6-acetyllysine; alternate. N6-succinyllysine; alternate is present on Lys321.

Belongs to the HIBADH-related family. 3-hydroxyisobutyrate dehydrogenase subfamily. As to quaternary structure, homodimer. In terms of tissue distribution, detected in skin fibroblasts.

The protein resides in the mitochondrion. It catalyses the reaction 3-hydroxy-2-methylpropanoate + NAD(+) = 2-methyl-3-oxopropanoate + NADH + H(+). It functions in the pathway amino-acid degradation; L-valine degradation. The protein is 3-hydroxyisobutyrate dehydrogenase, mitochondrial (HIBADH) of Homo sapiens (Human).